The chain runs to 1224 residues: WD repeat-containing protein 11 (1224 aa).

WD repeat units follow at residues 59 to 108 and 111 to 154; these read KHKA…AQCE and EHAK…KLWK. Residues Ser-205 and Ser-209 each carry the phosphoserine modification. Residues 354-393 form a WD 3 repeat; the sequence is KTVRPFSMVCCPVNENAAALVVSDGRVMIWELKSAVCNRN. A phosphoserine mark is found at Ser-402 and Ser-406. WD repeat units follow at residues 471–510, 566–605, 708–745, 747–787, 793–831, and 893–940; these read RMCP…LHKE, NDES…LLRE, GSMG…SRGI, THRS…MVSS, NVTF…ACFR, and SLSN…HSLS.

Component of the complex WDR11 composed of C17orf75, FAM91A1 and WDR11; FAM91A1 and WDR11 are required for proper location of the complex. Interacts (via the N-terminal and the central portion of the protein) with EMX1. Interacts with GLI3; the interaction associateS EMX1 with GLI3. Interacts with TBC1D23; this interaction may be indirect and recruits TBC1D23 to AP-1-derived vesicles. Ubiquitous.

The protein localises to the cytoplasm. It is found in the cytoskeleton. It localises to the cilium basal body. The protein resides in the nucleus. Its subcellular location is the cilium axoneme. The protein localises to the cytoplasmic vesicle. It is found in the golgi apparatus. It localises to the trans-Golgi network. Involved in the Hedgehog (Hh) signaling pathway, is essential for normal ciliogenesis. Regulates the proteolytic processing of GLI3 and cooperates with the transcription factor EMX1 in the induction of downstream Hh pathway gene expression and gonadotropin-releasing hormone production. WDR11 complex facilitates the tethering of Adaptor protein-1 complex (AP-1)-derived vesicles. WDR11 complex acts together with TBC1D23 to facilitate the golgin-mediated capture of vesicles generated using AP-1. In Homo sapiens (Human), this protein is WD repeat-containing protein 11 (WDR11).